Consider the following 211-residue polypeptide: Pupal cuticle protein G1A (211 aa).

5 repeat units span residues 13–16 (AAPA), 21–24 (AAPA), 33–36 (AAPV), 111–114 (AAPV), and 179–182 (AAPV).

Its function is as follows. Component of the cuticle of the pupa of Tenebrio molitor. The sequence is that of Pupal cuticle protein G1A from Tenebrio molitor (Yellow mealworm beetle).